A 678-amino-acid chain; its full sequence is Vitrin (678 aa).

A signal peptide spans methionine 1–serine 26. Positions threonine 40–phenylalanine 133 constitute an LCCL domain. Disulfide bonds link cysteine 46/cysteine 62 and cysteine 66/cysteine 86. A compositionally biased stretch (polar residues) spans serine 154–alanine 168. Disordered regions lie at residues serine 154–threonine 177 and threonine 199–phenylalanine 257. The segment covering threonine 199 to proline 216 has biased composition (low complexity). Residues serine 230–arginine 240 show a composition bias toward polar residues. VWFA domains lie at aspartate 293 to valine 478 and aspartate 495 to isoleucine 668. Asparagine 390 and asparagine 520 each carry an N-linked (GlcNAc...) asparagine glycan.

As to quaternary structure, binds dermatan sulfate and chondroitin sulfate.

The protein resides in the secreted. It localises to the extracellular space. Its subcellular location is the extracellular matrix. Promotes matrix assembly and cell adhesiveness. Plays a role in spinal cord formation by regulating the proliferation and differentiation of neural stem cells. The sequence is that of Vitrin (VIT) from Homo sapiens (Human).